The sequence spans 261 residues: Ribonuclease HII (261 aa).

Residues 72-260 enclose the RNase H type-2 domain; the sequence is AVICGIDEVG…IKSIVLEKLD (189 aa). A divalent metal cation contacts are provided by Asp-78, Glu-79, and Asp-170.

This sequence belongs to the RNase HII family. The cofactor is Mn(2+). Mg(2+) serves as cofactor.

The protein localises to the cytoplasm. It catalyses the reaction Endonucleolytic cleavage to 5'-phosphomonoester.. Endonuclease that specifically degrades the RNA of RNA-DNA hybrids. In Staphylococcus carnosus (strain TM300), this protein is Ribonuclease HII.